Consider the following 696-residue polypeptide: Equisetin cluster transcription factor eqxF (696 aa).

Disordered regions lie at residues 1–24 (MADQ…GRAR) and 73–117 (NQEQ…PADY).

Its subcellular location is the nucleus. Transcription factor that regulates the expression of the gene cluster that mediates the biosynthesis of Equisetin. The polypeptide is Equisetin cluster transcription factor eqxF (Fusarium heterosporum).